The following is a 347-amino-acid chain: N-acetyl-gamma-glutamyl-phosphate reductase (347 aa).

The active site involves Cys-153.

It belongs to the NAGSA dehydrogenase family. Type 1 subfamily.

It localises to the cytoplasm. It carries out the reaction N-acetyl-L-glutamate 5-semialdehyde + phosphate + NADP(+) = N-acetyl-L-glutamyl 5-phosphate + NADPH + H(+). The protein operates within amino-acid biosynthesis; L-arginine biosynthesis; N(2)-acetyl-L-ornithine from L-glutamate: step 3/4. Its function is as follows. Catalyzes the NADPH-dependent reduction of N-acetyl-5-glutamyl phosphate to yield N-acetyl-L-glutamate 5-semialdehyde. The chain is N-acetyl-gamma-glutamyl-phosphate reductase from Mycobacterium leprae (strain Br4923).